A 431-amino-acid chain; its full sequence is Enolase (431 aa).

(2R)-2-phosphoglycerate is bound at residue glutamine 166. Residue glutamate 208 is the Proton donor of the active site. The Mg(2+) site is built by aspartate 245, glutamate 288, and aspartate 315. Residues lysine 340, arginine 369, serine 370, and lysine 391 each contribute to the (2R)-2-phosphoglycerate site. Lysine 340 acts as the Proton acceptor in catalysis.

This sequence belongs to the enolase family. It depends on Mg(2+) as a cofactor.

It localises to the cytoplasm. The protein resides in the secreted. Its subcellular location is the cell surface. The catalysed reaction is (2R)-2-phosphoglycerate = phosphoenolpyruvate + H2O. Its pathway is carbohydrate degradation; glycolysis; pyruvate from D-glyceraldehyde 3-phosphate: step 4/5. Its function is as follows. Catalyzes the reversible conversion of 2-phosphoglycerate (2-PG) into phosphoenolpyruvate (PEP). It is essential for the degradation of carbohydrates via glycolysis. This is Enolase from Clostridium botulinum (strain 657 / Type Ba4).